A 323-amino-acid polypeptide reads, in one-letter code: Large ribosomal subunit protein uL10x (323 aa).

The tract at residues 287-323 is disordered; the sequence is DAGGGSAQAGAAAKVEEKKEESDEEDYEGGFGLFDEE. Phosphoserine is present on serine 308. Acidic residues predominate over residues 308 to 323; the sequence is SDEEDYEGGFGLFDEE. A Phosphotyrosine modification is found at tyrosine 313.

It belongs to the universal ribosomal protein uL10 family. In terms of assembly, P0 forms a pentameric complex by interaction with dimers of P1 and P2.

Its function is as follows. Ribosomal protein P0 is the functional equivalent of E.coli protein L10. This Arabidopsis thaliana (Mouse-ear cress) protein is Large ribosomal subunit protein uL10x (RPP0C).